The primary structure comprises 160 residues: Cyclic pyranopterin monophosphate synthase (160 aa).

Substrate-binding positions include 75-77 (LCH) and 113-114 (ME). Asp128 is a catalytic residue.

It belongs to the MoaC family. Homohexamer; trimer of dimers.

It catalyses the reaction (8S)-3',8-cyclo-7,8-dihydroguanosine 5'-triphosphate = cyclic pyranopterin phosphate + diphosphate. It functions in the pathway cofactor biosynthesis; molybdopterin biosynthesis. In terms of biological role, catalyzes the conversion of (8S)-3',8-cyclo-7,8-dihydroguanosine 5'-triphosphate to cyclic pyranopterin monophosphate (cPMP). The protein is Cyclic pyranopterin monophosphate synthase of Ruthia magnifica subsp. Calyptogena magnifica.